The following is a 316-amino-acid chain: Haloacid dehalogenase-like hydrolase domain-containing protein At4g39970 (316 aa).

A chloroplast-targeting transit peptide spans 1-46 (MAVSCNHSAILFSPSSTAGSSSVTSSSSLIGFPRFQTLRFKSRSVY). Asp-69 (nucleophile) is an active-site residue. 3 residues coordinate Mg(2+): Asp-69, Asp-71, and Asp-259. Asp-71 acts as the Proton donor in catalysis.

It belongs to the HAD-like hydrolase superfamily. DOG/GPP family. Mg(2+) serves as cofactor.

Its subcellular location is the plastid. The protein localises to the chloroplast. In Arabidopsis thaliana (Mouse-ear cress), this protein is Haloacid dehalogenase-like hydrolase domain-containing protein At4g39970.